The chain runs to 964 residues: SKI family transcriptional corepressor 1 (964 aa).

Disordered regions lie at residues 45–72 (TQLG…SSAL), 278–365 (RTFS…GGSA), 414–452 (AGEP…PGPG), 525–587 (AGGG…RKSS), 610–766 (REAY…GPAA), and 793–842 (YLCT…EDGL). Residues 283-310 (QGGGGGGANSGSGGAGKGGAGGGGGPGC) show a composition bias toward gly residues. The segment covering 345-355 (ALGLAAAANGP) has biased composition (low complexity). 2 stretches are compositionally biased toward gly residues: residues 356-365 (AGPGGPGGSA) and 417-440 (PKGG…GPGA). Pro residues predominate over residues 571-583 (SLAPLAPPPPPPA). A compositionally biased stretch (acidic residues) spans 652-661 (DTADEPEVDV). A compositionally biased stretch (basic and acidic residues) spans 798 to 808 (ETHEPDKEDNH). Residues 823-834 (DQRSVSQPSPAN) are compositionally biased toward polar residues. Residues 857-921 (ENLAREELQK…DTLCNELDQE (65 aa)) are a coiled coil.

It belongs to the SKI family. As to quaternary structure, interacts with LBX1. Interacts with SMAD1, SMAD2 and SMAD3.

The protein localises to the nucleus. In terms of biological role, inhibits BMP signaling. Acts as a transcriptional corepressor of LBX1. The polypeptide is SKI family transcriptional corepressor 1 (Skor1) (Rattus norvegicus (Rat)).